Here is a 1201-residue protein sequence, read N- to C-terminus: Period circadian protein homolog 3 (1201 aa).

The disordered stretch occupies residues 1–50; sequence MPRGEAPGPGRRGAKDEALGEESGERWSPEFHLQRKLADSSHSEQQDRNR. A compositionally biased stretch (basic and acidic residues) spans 13–50; that stretch reads GAKDEALGEESGERWSPEFHLQRKLADSSHSEQQDRNR. Positions 55 to 64 match the Nuclear export signal 1 motif; sequence LIMVVQEMKK. 2 consecutive PAS domains span residues 121-188 and 262-328; these read IASE…RAQL and YEAP…KVLK. The region spanning 337–380 is the PAC domain; it reads HSPIRFCTQNGDYIILDSSWSSFVNPWSRKISFIIGRHKVRTSP. A Nuclear export signal 3 motif is present at residues 403-412; that stretch reads LQEQIYKLLL. The segment at 555–760 is CSNK1E binding domain; sequence LKRKCISCTN…SSSNTGSGPR (206 aa). Disordered stretches follow at residues 717 to 788 and 881 to 923; these read YSYF…FPPA and PSMS…RSSS. The segment covering 721-731 has biased composition (polar residues); that stretch reads QGDSTSKQTRS. The short motif at 729–745 is the Nuclear localization signal element; the sequence is TRSAGCRKGKHKRKKLP. Positions 733 to 743 are enriched in basic residues; that stretch reads GCRKGKHKRKK. Composition is skewed to low complexity over residues 767–783 and 881–890; these read AQPCCPSAASSPHTSSP and PSMSSAMSPT. Residues 900–911 show a composition bias toward basic and acidic residues; the sequence is QRREEEKWEAQS. Serine 919 bears the Phosphoserine mark. Positions 925-932 match the Nuclear export signal 2 motif; the sequence is LQLNLLQE. The tract at residues 952 to 1067 is disordered; sequence TEYCVTGNNG…GSAASGSSDS (116 aa). Polar residues-rich tracts occupy residues 957 to 976, 983 to 994, 1001 to 1012, and 1035 to 1050; these read TGNNGSESSPATTGALSTGS, SHPTASALSTGS, and TPSHPTATVLSTGSPP. A run of 5 repeats spans residues 965–982, 983–1000, 1001–1018, 1019–1036, and 1037–1054. A 5 X 18 AA tandem repeats of S-[HP]-[AP]-T-[AT]-[GST]-[ATV]-L-S-[MT]-G-[LS]-P-P-[MRS]-[EKR]-[NST]-P region spans residues 965-1054; the sequence is SPATTGALST…STGSPPSESP (90 aa). Phosphoserine is present on serine 994. Serine 1053 carries the post-translational modification Phosphoserine. The segment covering 1053–1067 has biased composition (low complexity); that stretch reads SPSRTGSAASGSSDS. The interval 1123 to 1201 is CRY binding domain; that stretch reads ERVKEVVLKE…CGQVLVEDSC (79 aa).

Homodimer. Component of the circadian core oscillator, which includes the CRY proteins, CLOCK or NPAS2, BMAL1 or BMAL2, CSNK1D and/or CSNK1E, TIMELESS and the PER proteins. Interacts directly with PER1, PER2, CRY1, CRY2, and TIMELESS; interaction with CRY1 and CRY2 is weak and not rhythmic. Interacts with FBXW11 and BTRC. Phosphorylation by CSNK1E is weak and appears to require association with PER1 and translocation to the nucleus. In terms of processing, ubiquitinated.

The protein localises to the cytoplasm. The protein resides in the nucleus. Originally described as a core component of the circadian clock. The circadian clock, an internal time-keeping system, regulates various physiological processes through the generation of approximately 24 hour circadian rhythms in gene expression, which are translated into rhythms in metabolism and behavior. It is derived from the Latin roots 'circa' (about) and 'diem' (day) and acts as an important regulator of a wide array of physiological functions including metabolism, sleep, body temperature, blood pressure, endocrine, immune, cardiovascular, and renal function. Consists of two major components: the central clock, residing in the suprachiasmatic nucleus (SCN) of the brain, and the peripheral clocks that are present in nearly every tissue and organ system. Both the central and peripheral clocks can be reset by environmental cues, also known as Zeitgebers (German for 'timegivers'). The predominant Zeitgeber for the central clock is light, which is sensed by retina and signals directly to the SCN. The central clock entrains the peripheral clocks through neuronal and hormonal signals, body temperature and feeding-related cues, aligning all clocks with the external light/dark cycle. Circadian rhythms allow an organism to achieve temporal homeostasis with its environment at the molecular level by regulating gene expression to create a peak of protein expression once every 24 hours to control when a particular physiological process is most active with respect to the solar day. Transcription and translation of core clock components (CLOCK, NPAS2, BMAL1, BMAL2, PER1, PER2, PER3, CRY1 and CRY2) plays a critical role in rhythm generation, whereas delays imposed by post-translational modifications (PTMs) are important for determining the period (tau) of the rhythms (tau refers to the period of a rhythm and is the length, in time, of one complete cycle). A diurnal rhythm is synchronized with the day/night cycle, while the ultradian and infradian rhythms have a period shorter and longer than 24 hours, respectively. Disruptions in the circadian rhythms contribute to the pathology of cardiovascular diseases, cancer, metabolic syndromes and aging. A transcription/translation feedback loop (TTFL) forms the core of the molecular circadian clock mechanism. Transcription factors, CLOCK or NPAS2 and BMAL1 or BMAL2, form the positive limb of the feedback loop, act in the form of a heterodimer and activate the transcription of core clock genes and clock-controlled genes (involved in key metabolic processes), harboring E-box elements (5'-CACGTG-3') within their promoters. The core clock genes: PER1/2/3 and CRY1/2 which are transcriptional repressors form the negative limb of the feedback loop and interact with the CLOCK|NPAS2-BMAL1|BMAL2 heterodimer inhibiting its activity and thereby negatively regulating their own expression. This heterodimer also activates nuclear receptors NR1D1, NR1D2, RORA, RORB and RORG, which form a second feedback loop and which activate and repress BMAL1 transcription, respectively. Has a redundant role with the other PER proteins PER1 and PER2 and is not essential for the circadian rhythms maintenance. In contrast, plays an important role in sleep-wake timing and sleep homeostasis probably through the transcriptional regulation of sleep homeostasis-related genes, without influencing circadian parameters. Can bind heme. The chain is Period circadian protein homolog 3 (PER3) from Homo sapiens (Human).